A 409-amino-acid polypeptide reads, in one-letter code: Argininosuccinate synthase (409 aa).

ATP contacts are provided by residues 11–19 (AYSGGLDTS) and A38. Residues Y91 and S96 each contribute to the L-citrulline site. G121 serves as a coordination point for ATP. L-aspartate is bound by residues T123, N127, and D128. An L-citrulline-binding site is contributed by N127. The L-citrulline site is built by R131, S182, S191, E267, and Y279.

The protein belongs to the argininosuccinate synthase family. Type 1 subfamily. In terms of assembly, homotetramer.

It is found in the cytoplasm. It carries out the reaction L-citrulline + L-aspartate + ATP = 2-(N(omega)-L-arginino)succinate + AMP + diphosphate + H(+). The protein operates within amino-acid biosynthesis; L-arginine biosynthesis; L-arginine from L-ornithine and carbamoyl phosphate: step 2/3. In Nitrobacter winogradskyi (strain ATCC 25391 / DSM 10237 / CIP 104748 / NCIMB 11846 / Nb-255), this protein is Argininosuccinate synthase.